Here is a 100-residue protein sequence, read N- to C-terminus: Urease subunit gamma (100 aa).

This sequence belongs to the urease gamma subunit family. In terms of assembly, heterotrimer of UreA (gamma), UreB (beta) and UreC (alpha) subunits. Three heterotrimers associate to form the active enzyme.

The protein localises to the cytoplasm. It catalyses the reaction urea + 2 H2O + H(+) = hydrogencarbonate + 2 NH4(+). Its pathway is nitrogen metabolism; urea degradation; CO(2) and NH(3) from urea (urease route): step 1/1. In Mycolicibacterium smegmatis (strain ATCC 700084 / mc(2)155) (Mycobacterium smegmatis), this protein is Urease subunit gamma.